Consider the following 99-residue polypeptide: Large ribosomal subunit protein uL23 (99 aa).

The protein belongs to the universal ribosomal protein uL23 family. Part of the 50S ribosomal subunit. Contacts protein L29, and trigger factor when it is bound to the ribosome.

In terms of biological role, one of the early assembly proteins it binds 23S rRNA. One of the proteins that surrounds the polypeptide exit tunnel on the outside of the ribosome. Forms the main docking site for trigger factor binding to the ribosome. The sequence is that of Large ribosomal subunit protein uL23 from Francisella philomiragia subsp. philomiragia (strain ATCC 25017 / CCUG 19701 / FSC 153 / O#319-036).